A 433-amino-acid polypeptide reads, in one-letter code: Adenylosuccinate synthetase (433 aa).

GTP is bound by residues 11–17 and 39–41; these read GDEGKGK and GHT. The active-site Proton acceptor is Asp-12. Positions 12 and 39 each coordinate Mg(2+). IMP is bound by residues 12–15, 37–40, Thr-134, Arg-148, Asn-230, Thr-245, and Arg-309; these read DEGK and NAGH. His-40 acts as the Proton donor in catalysis. 305–311 contributes to the substrate binding site; the sequence is VTTGRKR. GTP-binding positions include Arg-311, 337–339, and 419–421; these read KLD and GTG.

Belongs to the adenylosuccinate synthetase family. In terms of assembly, homodimer. It depends on Mg(2+) as a cofactor.

It is found in the cytoplasm. It carries out the reaction IMP + L-aspartate + GTP = N(6)-(1,2-dicarboxyethyl)-AMP + GDP + phosphate + 2 H(+). It functions in the pathway purine metabolism; AMP biosynthesis via de novo pathway; AMP from IMP: step 1/2. Functionally, plays an important role in the de novo pathway and in the salvage pathway of purine nucleotide biosynthesis. Catalyzes the first committed step in the biosynthesis of AMP from IMP. In Eremothecium gossypii (strain ATCC 10895 / CBS 109.51 / FGSC 9923 / NRRL Y-1056) (Yeast), this protein is Adenylosuccinate synthetase.